Reading from the N-terminus, the 757-residue chain is Primary amine oxidase (757 aa).

The N-terminal stretch at 1-30 is a signal peptide; the sequence is MGSPSLYSARKTTLALAVALSFAWQAPVFA. Substrate-binding positions include 411–422 and 493–498; these read YLDSGDYGMGTL and VGNYDY. Residue Asp-413 is the Proton acceptor of the active site. Tyr-496 serves as the catalytic Schiff-base intermediate with substrate; via topaquinone. Tyr-496 carries the post-translational modification 2',4',5'-topaquinone. Positions 554 and 556 each coordinate Cu cation. Residues Asp-563, Leu-564, Asp-565, Glu-603, Tyr-697, Asp-700, Glu-702, Asp-708, and Ala-709 each coordinate Ca(2+). Asp-563 contributes to the Mn(2+) binding site. Residue Asp-565 coordinates Mn(2+). Residues 680–701 form a disordered region; the sequence is PEGKYPNRSTHDTGLGQYSKDN. Asp-708 contacts Mn(2+). His-719 serves as a coordination point for Cu cation.

Belongs to the copper/topaquinone oxidase family. In terms of assembly, homodimer. Cu cation is required as a cofactor. The cofactor is Zn(2+). Ca(2+) serves as cofactor. It depends on L-topaquinone as a cofactor. Requires Mn(2+) as cofactor. In terms of processing, topaquinone (TPQ) is generated by copper-dependent autoxidation of a specific tyrosyl residue.

The protein localises to the periplasm. The enzyme catalyses a primary methyl amine + O2 + H2O = an aldehyde + H2O2 + NH4(+). The catalysed reaction is 2-phenylethylamine + O2 + H2O = 2-phenylacetaldehyde + H2O2 + NH4(+). The protein operates within amino-acid degradation; L-phenylalanine degradation; phenylacetate from L-phenylalanine: step 2/3. Inhibited by 2-hydrazinopyridine. In terms of biological role, the enzyme prefers aromatic over aliphatic amines. The protein is Primary amine oxidase (tynA) of Escherichia coli (strain K12).